A 444-amino-acid chain; its full sequence is Tubulin beta chain (444 aa).

GTP is bound by residues Gln-11, Glu-69, Ser-138, Gly-142, Thr-143, Gly-144, Asn-204, and Asn-226. Glu-69 provides a ligand contact to Mg(2+).

The protein belongs to the tubulin family. As to quaternary structure, dimer of alpha and beta chains. A typical microtubule is a hollow water-filled tube with an outer diameter of 25 nm and an inner diameter of 15 nM. Alpha-beta heterodimers associate head-to-tail to form protofilaments running lengthwise along the microtubule wall with the beta-tubulin subunit facing the microtubule plus end conferring a structural polarity. Microtubules usually have 13 protofilaments but different protofilament numbers can be found in some organisms and specialized cells. It depends on Mg(2+) as a cofactor.

It localises to the cytoplasm. It is found in the cytoskeleton. Tubulin is the major constituent of microtubules, a cylinder consisting of laterally associated linear protofilaments composed of alpha- and beta-tubulin heterodimers. Microtubules grow by the addition of GTP-tubulin dimers to the microtubule end, where a stabilizing cap forms. Below the cap, tubulin dimers are in GDP-bound state, owing to GTPase activity of alpha-tubulin. This is Tubulin beta chain from Euplotoides octocarinatus (Freshwater ciliate).